The sequence spans 66 residues: Toxin Os1 (66 aa).

Residues 2–66 (RDGYIVQLHN…PIKWLDPKCY (65 aa)) enclose the LCN-type CS-alpha/beta domain. Disulfide bonds link C12/C65, C16/C37, C22/C47, and C26/C49.

The protein belongs to the long (4 C-C) scorpion toxin superfamily. Sodium channel inhibitor family. Alpha subfamily. Expressed by the venom gland.

It localises to the secreted. Functionally, alpha toxins bind voltage-independently at site-3 of sodium channels (Nav) and inhibit the inactivation of the activated channels, thereby blocking neuronal transmission. This toxin possesses a high paralytic activity against mice. The protein is Toxin Os1 of Orthochirus scrobiculosus (Central Asian scorpion).